A 326-amino-acid polypeptide reads, in one-letter code: Ribose operon repressor (326 aa).

An HTH lacI-type domain is found at 1 to 56 (MATIKDVAGAAGVSVATVSRNLNDNGYVHEETRTRVIAAMAKLNYYPNEVARSLYK). A DNA-binding region (H-T-H motif) is located at residues 4–23 (IKDVAGAAGVSVATVSRNLN).

Functionally, transcriptional repressor for the ribose rbsDACBK operon. This Bacillus subtilis (strain 168) protein is Ribose operon repressor (rbsR).